The chain runs to 31 residues: Toxin BmKK16 (31 aa).

Residue Gln1 is modified to Pyrrolidone carboxylic acid. 3 disulfide bridges follow: Cys4–Cys20, Cys10–Cys25, and Cys14–Cys27. Pro31 bears the Proline amide mark.

It belongs to the short scorpion toxin superfamily. Potassium channel inhibitor family. Alpha-KTx 17 subfamily. Post-translationally, the N-terminus is blocked. As to expression, expressed by the venom gland.

The protein localises to the secreted. In terms of biological role, blocker of potassium channels (Kv). This chain is Toxin BmKK16, found in Olivierus martensii (Manchurian scorpion).